A 689-amino-acid chain; its full sequence is Glycine--tRNA ligase beta subunit (689 aa).

It belongs to the class-II aminoacyl-tRNA synthetase family. As to quaternary structure, tetramer of two alpha and two beta subunits.

The protein localises to the cytoplasm. The enzyme catalyses tRNA(Gly) + glycine + ATP = glycyl-tRNA(Gly) + AMP + diphosphate. This is Glycine--tRNA ligase beta subunit from Salmonella typhi.